A 691-amino-acid chain; its full sequence is MARPFPLERVRNIGIAAHIDAGKTTTTERILFYSGVVHKIGEVHDGAAVTDWMAQERERGITITAAAISTSWQDHRINIIDTPGHVDFTIEVERSMRVLDGVIAVFCAVGGVQPQSETVWRQADRYSVPRMVFVNKMDRTGADFLKVYGQIKDRLKANAAPIQLPIGAEGDLSGIIDLVANKAYIYKNDLGTDIEESDIPADMASEAAEWRAKLMETVAETDEELIEQFLENGELTEQQLKKGIREGVLKHGLVPLLCGSAFKNKGVQLVLDAVVDYLPAPVDVPPIQGVLPNGEEAVRPSDDSEPFSALAFKVMADPYGKLTFVRMYSGVLEKGSYVTNSTKDIKERISRLVVLKADDREEVDQLRAGDLGAVLGLKNTTTGDTLCTTDEPIVLETLFIPEPVISVAVEPKTKGDMEKLSKALVSLAEEDPTFRVSTDQETNQTVIAGMGELHLEILVDRMLREFKVEANIGAPQVSYRETIRSSSKGEGKFARQTGGKGQYGHVVIEMEPGEPGTGFEFVNKIVGGVVPKEYIGPASNGMKETCESGVLAGYPLIDVKVTMVDGSFHDVDSSEMAFKIAGSMAFKDGVKKCNPVLLEPMMKVEVETPEDFLGSIIGDLSSRRGQVEGQSIDDGQSKVQAKVPLAEMFGYATQLRSMTQGRGIFSMEFSNYEEVPRNVAEAIISKNQGNS.

Positions 8 to 282 (ERVRNIGIAA…AVVDYLPAPV (275 aa)) constitute a tr-type G domain. Residues 17 to 24 (AHIDAGKT), 81 to 85 (DTPGH), and 135 to 138 (NKMD) contribute to the GTP site.

It belongs to the TRAFAC class translation factor GTPase superfamily. Classic translation factor GTPase family. EF-G/EF-2 subfamily.

The protein localises to the cytoplasm. In terms of biological role, catalyzes the GTP-dependent ribosomal translocation step during translation elongation. During this step, the ribosome changes from the pre-translocational (PRE) to the post-translocational (POST) state as the newly formed A-site-bound peptidyl-tRNA and P-site-bound deacylated tRNA move to the P and E sites, respectively. Catalyzes the coordinated movement of the two tRNA molecules, the mRNA and conformational changes in the ribosome. The sequence is that of Elongation factor G from Prochlorococcus marinus (strain MIT 9211).